The primary structure comprises 122 residues: Holo-[acyl-carrier-protein] synthase (122 aa).

Residues Asp-8 and Glu-56 each contribute to the Mg(2+) site.

The protein belongs to the P-Pant transferase superfamily. AcpS family. Mg(2+) serves as cofactor.

Its subcellular location is the cytoplasm. It carries out the reaction apo-[ACP] + CoA = holo-[ACP] + adenosine 3',5'-bisphosphate + H(+). Functionally, transfers the 4'-phosphopantetheine moiety from coenzyme A to a Ser of acyl-carrier-protein. In Streptomyces griseus subsp. griseus (strain JCM 4626 / CBS 651.72 / NBRC 13350 / KCC S-0626 / ISP 5235), this protein is Holo-[acyl-carrier-protein] synthase.